Consider the following 109-residue polypeptide: Oncomodulin (109 aa).

The residue at position 2 (Ser-2) is an N-acetylserine. 2 consecutive EF-hand domains span residues 39–74 and 78–109; these read MSASQLKDIFQFIDNDQSGYLDEDELKYFLQRFQSD and LTESETKSLMDAADNDGDGKIGADEFQEMVHS. Ca(2+) is bound by residues Asp-52, Asp-54, Ser-56, Tyr-58, Glu-63, Asp-91, Asp-93, Asp-95, Lys-97, and Glu-102. Residues 82–109 are disordered; it reads ETKSLMDAADNDGDGKIGADEFQEMVHS. The span at 94–109 shows a compositional bias: basic and acidic residues; it reads GDGKIGADEFQEMVHS.

This sequence belongs to the parvalbumin family. Found in tumor tissues and not detected in normal tissues.

Has some calmodulin-like activity with respect to enzyme activation and growth regulation. Binds two calcium ions. The chain is Oncomodulin (Ocm) from Mus musculus (Mouse).